We begin with the raw amino-acid sequence, 140 residues long: Nucleoside diphosphate kinase (140 aa).

Residues Lys11, Phe59, Arg87, Thr93, Arg104, and Asn114 each coordinate ATP. His117 (pros-phosphohistidine intermediate) is an active-site residue.

Belongs to the NDK family. In terms of assembly, homotetramer. Requires Mg(2+) as cofactor.

The protein resides in the cytoplasm. It carries out the reaction a 2'-deoxyribonucleoside 5'-diphosphate + ATP = a 2'-deoxyribonucleoside 5'-triphosphate + ADP. The catalysed reaction is a ribonucleoside 5'-diphosphate + ATP = a ribonucleoside 5'-triphosphate + ADP. Functionally, major role in the synthesis of nucleoside triphosphates other than ATP. The ATP gamma phosphate is transferred to the NDP beta phosphate via a ping-pong mechanism, using a phosphorylated active-site intermediate. The chain is Nucleoside diphosphate kinase from Rhodospirillum rubrum (strain ATCC 11170 / ATH 1.1.1 / DSM 467 / LMG 4362 / NCIMB 8255 / S1).